Here is a 362-residue protein sequence, read N- to C-terminus: tRNA/tmRNA (uracil-C(5))-methyltransferase (362 aa).

Glutamine 186, tyrosine 214, asparagine 219, glutamate 235, and aspartate 295 together coordinate S-adenosyl-L-methionine. Catalysis depends on cysteine 320, which acts as the Nucleophile. The Proton acceptor role is filled by glutamate 354.

Belongs to the class I-like SAM-binding methyltransferase superfamily. RNA M5U methyltransferase family. TrmA subfamily.

It carries out the reaction uridine(54) in tRNA + S-adenosyl-L-methionine = 5-methyluridine(54) in tRNA + S-adenosyl-L-homocysteine + H(+). The catalysed reaction is uridine(341) in tmRNA + S-adenosyl-L-methionine = 5-methyluridine(341) in tmRNA + S-adenosyl-L-homocysteine + H(+). Dual-specificity methyltransferase that catalyzes the formation of 5-methyluridine at position 54 (m5U54) in all tRNAs, and that of position 341 (m5U341) in tmRNA (transfer-mRNA). In Ectopseudomonas mendocina (strain ymp) (Pseudomonas mendocina), this protein is tRNA/tmRNA (uracil-C(5))-methyltransferase.